Here is a 295-residue protein sequence, read N- to C-terminus: Phosphatidylserine decarboxylase proenzyme (295 aa).

Catalysis depends on charge relay system; for autoendoproteolytic cleavage activity residues D101, H158, and S262. The active-site Schiff-base intermediate with substrate; via pyruvic acid; for decarboxylase activity is the S262. Residue S262 is modified to Pyruvic acid (Ser); by autocatalysis.

Belongs to the phosphatidylserine decarboxylase family. PSD-B subfamily. Prokaryotic type I sub-subfamily. Heterodimer of a large membrane-associated beta subunit and a small pyruvoyl-containing alpha subunit. The cofactor is pyruvate. Is synthesized initially as an inactive proenzyme. Formation of the active enzyme involves a self-maturation process in which the active site pyruvoyl group is generated from an internal serine residue via an autocatalytic post-translational modification. Two non-identical subunits are generated from the proenzyme in this reaction, and the pyruvate is formed at the N-terminus of the alpha chain, which is derived from the carboxyl end of the proenzyme. The autoendoproteolytic cleavage occurs by a canonical serine protease mechanism, in which the side chain hydroxyl group of the serine supplies its oxygen atom to form the C-terminus of the beta chain, while the remainder of the serine residue undergoes an oxidative deamination to produce ammonia and the pyruvoyl prosthetic group on the alpha chain. During this reaction, the Ser that is part of the protease active site of the proenzyme becomes the pyruvoyl prosthetic group, which constitutes an essential element of the active site of the mature decarboxylase.

It localises to the cell membrane. The enzyme catalyses a 1,2-diacyl-sn-glycero-3-phospho-L-serine + H(+) = a 1,2-diacyl-sn-glycero-3-phosphoethanolamine + CO2. It participates in phospholipid metabolism; phosphatidylethanolamine biosynthesis; phosphatidylethanolamine from CDP-diacylglycerol: step 2/2. Functionally, catalyzes the formation of phosphatidylethanolamine (PtdEtn) from phosphatidylserine (PtdSer). The polypeptide is Phosphatidylserine decarboxylase proenzyme (Pasteurella multocida (strain Pm70)).